Consider the following 330-residue polypeptide: Phenylalanine--tRNA ligase alpha subunit (330 aa).

Residue E246 participates in Mg(2+) binding.

It belongs to the class-II aminoacyl-tRNA synthetase family. Phe-tRNA synthetase alpha subunit type 1 subfamily. Tetramer of two alpha and two beta subunits. Mg(2+) is required as a cofactor.

It localises to the cytoplasm. The enzyme catalyses tRNA(Phe) + L-phenylalanine + ATP = L-phenylalanyl-tRNA(Phe) + AMP + diphosphate + H(+). This is Phenylalanine--tRNA ligase alpha subunit from Sulfurovum sp. (strain NBC37-1).